The following is a 496-amino-acid chain: UDP-glycosyltransferase 73C3 (496 aa).

Residues Ser-297, 357–359, 374–382, and 396–399 each bind UDP-alpha-D-glucose; these read APQ, HCGWNSTLE, and FGDQ.

It belongs to the UDP-glycosyltransferase family.

The sequence is that of UDP-glycosyltransferase 73C3 (UGT73C3) from Arabidopsis thaliana (Mouse-ear cress).